The following is a 186-amino-acid chain: ATP-dependent protease subunit HslV (186 aa).

Threonine 14 is an active-site residue. The Na(+) site is built by alanine 168, cysteine 171, and threonine 174.

Belongs to the peptidase T1B family. HslV subfamily. In terms of assembly, a double ring-shaped homohexamer of HslV is capped on each side by a ring-shaped HslU homohexamer. The assembly of the HslU/HslV complex is dependent on binding of ATP.

It localises to the cytoplasm. The catalysed reaction is ATP-dependent cleavage of peptide bonds with broad specificity.. Allosterically activated by HslU binding. In terms of biological role, protease subunit of a proteasome-like degradation complex believed to be a general protein degrading machinery. The chain is ATP-dependent protease subunit HslV from Methylorubrum extorquens (strain CM4 / NCIMB 13688) (Methylobacterium extorquens).